The following is a 158-amino-acid chain: Phosphopantetheine adenylyltransferase (158 aa).

Thr-10 contributes to the substrate binding site. ATP contacts are provided by residues 10–11 (TF) and His-18. Residues Lys-42, Leu-74, and Arg-88 each contribute to the substrate site. Residues 89–91 (GLR), Glu-99, and 124–130 (YSFISSS) contribute to the ATP site.

It belongs to the bacterial CoaD family. In terms of assembly, homohexamer. Requires Mg(2+) as cofactor.

The protein resides in the cytoplasm. It catalyses the reaction (R)-4'-phosphopantetheine + ATP + H(+) = 3'-dephospho-CoA + diphosphate. The protein operates within cofactor biosynthesis; coenzyme A biosynthesis; CoA from (R)-pantothenate: step 4/5. Functionally, reversibly transfers an adenylyl group from ATP to 4'-phosphopantetheine, yielding dephospho-CoA (dPCoA) and pyrophosphate. This Erwinia tasmaniensis (strain DSM 17950 / CFBP 7177 / CIP 109463 / NCPPB 4357 / Et1/99) protein is Phosphopantetheine adenylyltransferase.